The sequence spans 421 residues: UDP-N-acetylglucosamine 1-carboxyvinyltransferase 2 (421 aa).

22–23 (KN) contacts phosphoenolpyruvate. R95 provides a ligand contact to UDP-N-acetyl-alpha-D-glucosamine. The active-site Proton donor is C119. Position 119 is a 2-(S-cysteinyl)pyruvic acid O-phosphothioketal (C119). UDP-N-acetyl-alpha-D-glucosamine contacts are provided by residues 124-128 (RPIEQ), D308, and V330.

The protein belongs to the EPSP synthase family. MurA subfamily.

Its subcellular location is the cytoplasm. The enzyme catalyses phosphoenolpyruvate + UDP-N-acetyl-alpha-D-glucosamine = UDP-N-acetyl-3-O-(1-carboxyvinyl)-alpha-D-glucosamine + phosphate. The protein operates within cell wall biogenesis; peptidoglycan biosynthesis. Cell wall formation. Adds enolpyruvyl to UDP-N-acetylglucosamine. The chain is UDP-N-acetylglucosamine 1-carboxyvinyltransferase 2 from Staphylococcus haemolyticus (strain JCSC1435).